We begin with the raw amino-acid sequence, 300 residues long: Inositol polyphosphate multikinase beta (300 aa).

S78 is subject to Phosphoserine.

This sequence belongs to the inositol phosphokinase (IPK) family. Interacts with KIN10 and KIN11. In terms of processing, phosphorylated by KIN10. Expressed in leaves, stems, roots, siliques and flowers. Detected in vascular strands, stigma cells, the abscission zones of fully elongated siliques, the root central cylinder and the root tip.

The protein localises to the nucleus. It catalyses the reaction 1D-myo-inositol 1,4,5-trisphosphate + 2 ATP = 1D-myo-inositol 1,3,4,5,6-pentakisphosphate + 2 ADP + 2 H(+). It carries out the reaction 1D-myo-inositol 1,3,4,6-tetrakisphosphate + ATP = 1D-myo-inositol 1,3,4,5,6-pentakisphosphate + ADP + H(+). Its activity is regulated as follows. Down-regulated by KIN10 through its protein phosphorylation. Inositol phosphate kinase with a broad substrate specificity. Phosphorylates inositol 1,4,5-trisphosphate (Ins(1,4,5)P3), inositol 1,4,5,6-tetrakisphosphate (Ins(1,4,5,6)P4), inositol 1,3,4,5-tetrakisphosphate (Ins(1,3,4,5)P4), inositol 1,3,4,6-tetrakisphosphate (Ins(1,3,4,6)P4) and inositol 1,2,3,4,6-pentakisphosphate (Ins(1,2,3,4,6)P5) but not inositol 1,4-bisphosphate (Ins(1,4)P2), inositol 1,3,4-trisphosphate (Ins(1,3,4)P3), inositol 1,2,6-trisphosphate (Ins(1,2,6)P3), inositol 3,4,5,6-tetrakisphosphate (Ins(3,4,5,6)P4), inositol 1,3,4,5,6-pentakisphosphate (Ins(1,3,4,5,6)P5), inositol 1,2,4,5,6-pentakisphosphate (Ins(1,2,4,5,6)P5) or inositol hexakisphosphate (InsP6). Involved in the auxin signaling pathway. Regulates axillary shoot branching and is required for phytate synthesis in seeds. The polypeptide is Inositol polyphosphate multikinase beta (IPK2b) (Arabidopsis thaliana (Mouse-ear cress)).